Here is a 1939-residue protein sequence, read N- to C-terminus: Myosin-2 (1939 aa).

A Myosin N-terminal SH3-like domain is found at 33–82; it reads DAKTSVFVAEPKESFVKGTIQSREGGKVTVKTEAGATLTVKEDQVFPMNP. A phosphothreonine mark is found at Thr64 and Thr69. The region spanning 86 to 782 is the Myosin motor domain; it reads DKIEDMAMMT…LLGLLEEMRD (697 aa). At Lys130 the chain carries N6,N6,N6-trimethyllysine. 179–186 provides a ligand contact to ATP; the sequence is GESGAGKT. Tyr389 is subject to Phosphotyrosine. Ser392 carries the post-translational modification Phosphoserine. Thr419 is subject to Phosphothreonine. Position 625 is a phosphoserine (Ser625). An actin-binding region spans residues 659–681; that stretch reads LNKLMTNLRSTHPHFVRCIIPNE. His757 carries the pros-methylhistidine modification. An actin-binding region spans residues 761-775; sequence KFGHTKVFFKAGLLG. The IQ domain maps to 785–814; that stretch reads LAQLITRTQARCRGFLARVEYQKMVERRES. Residues 843-1939 are a coiled coil; sequence LLKSAESEKE…EVHTKVISEE (1097 aa). Phosphoserine is present on residues Ser1092 and Ser1096. 2 disordered regions span residues 1126 to 1147 and 1153 to 1172; these read IEAERASRAKAEKQRSDLSREL and RLEEAGGATSAQIEMNKKRE. A compositionally biased stretch (basic and acidic residues) spans 1128–1147; it reads AERASRAKAEKQRSDLSREL. 2 positions are modified to phosphoserine: Ser1162 and Ser1237. Residue Thr1241 is modified to Phosphothreonine. Ser1243 carries the phosphoserine modification. Thr1255 is modified (phosphothreonine). Ser1261 is subject to Phosphoserine. Position 1286 is a phosphothreonine (Thr1286). Residues Ser1288, Ser1292, Ser1303, and Ser1306 each carry the phosphoserine modification. Tyr1464 carries the post-translational modification Phosphotyrosine. Position 1467 is a phosphothreonine (Thr1467). Ser1474 is modified (phosphoserine). Tyr1492 carries the phosphotyrosine modification. Phosphoserine is present on Ser1495. Thr1501 is modified (phosphothreonine). Ser1514 carries the post-translational modification Phosphoserine. At Thr1517 the chain carries Phosphothreonine. Phosphoserine is present on residues Ser1542, Ser1554, Ser1574, Ser1600, Ser1603, Ser1714, and Ser1726. 2 positions are modified to phosphothreonine: Thr1730 and Thr1736. Ser1739 carries the phosphoserine modification. The tract at residues 1885 to 1915 is disordered; that stretch reads QAEEAEEQSNTNLSKFRKLQHELEEAEERAD.

It belongs to the TRAFAC class myosin-kinesin ATPase superfamily. Myosin family. As to quaternary structure, muscle myosin is a hexameric protein that consists of 2 heavy chain subunits (MHC), 2 alkali light chain subunits (MLC) and 2 regulatory light chain subunits (MLC-2). Interacts with GCSAM.

It localises to the cytoplasm. Its subcellular location is the myofibril. Its function is as follows. Myosins are actin-based motor molecules with ATPase activity essential for muscle contraction. In Sus scrofa (Pig), this protein is Myosin-2 (MYH2).